The sequence spans 679 residues: Membrane-spanning 4-domains subfamily A member 14 (679 aa).

4 helical membrane-spanning segments follow: residues 50-70 (ILLA…YIGF), 76-96 (LVVL…TGYL), 110-130 (VTGM…FTIL), and 141-161 (MPSF…LFFL). Disordered stretches follow at residues 218–259 (VSQP…EKKP), 331–363 (SEQT…ILSQ), 469–491 (KEWK…LNQQ), and 505–633 (VQAK…QAQV). Residues 224–234 (KGREFVPDEQK) are compositionally biased toward basic and acidic residues. Residues 337 to 348 (SKSTSSHVKQSS) show a composition bias toward low complexity. Over residues 469–478 (KEWKSEEELH) the composition is skewed to basic and acidic residues. Polar residues-rich tracts occupy residues 519-535 (DQQS…SLDQ) and 550-563 (KQAQ…QLPD). Basic and acidic residues predominate over residues 580–601 (QSKDGQVKDQQTDKEQNSKKQT). A compositionally biased stretch (polar residues) spans 619-632 (GQFQNVQAEGQQAQ).

Belongs to the MS4A family.

The protein resides in the membrane. Functionally, may be involved in signal transduction as a component of a multimeric receptor complex. In Homo sapiens (Human), this protein is Membrane-spanning 4-domains subfamily A member 14 (MS4A14).